A 427-amino-acid polypeptide reads, in one-letter code: Homogentisate 1,2-dioxygenase (427 aa).

Catalysis depends on His-285, which acts as the Proton acceptor. Fe cation-binding residues include His-328 and Glu-334. Residues Tyr-343 and His-364 each coordinate homogentisate. His-364 contributes to the Fe cation binding site.

The protein belongs to the homogentisate dioxygenase family. As to quaternary structure, hexamer; dimer of trimers. Fe cation serves as cofactor.

The catalysed reaction is homogentisate + O2 = 4-maleylacetoacetate + H(+). It functions in the pathway amino-acid degradation; L-phenylalanine degradation; acetoacetate and fumarate from L-phenylalanine: step 4/6. In terms of biological role, involved in the catabolism of homogentisate (2,5-dihydroxyphenylacetate or 2,5-OH-PhAc), a central intermediate in the degradation of phenylalanine and tyrosine. Catalyzes the oxidative ring cleavage of the aromatic ring of homogentisate to yield maleylacetoacetate. The polypeptide is Homogentisate 1,2-dioxygenase (Caulobacter sp. (strain K31)).